A 228-amino-acid polypeptide reads, in one-letter code: Thermonuclease (228 aa).

The N-terminal stretch at M1–A23 is a signal peptide. A propeptide spanning residues I24–A60 is cleaved from the precursor. Residue D100 participates in Ca(2+) binding. Residue R114 is part of the active site. The Ca(2+) site is built by D119 and T120. Catalysis depends on residues E122 and R166.

This sequence belongs to the thermonuclease family. Requires Ca(2+) as cofactor.

It is found in the secreted. The catalysed reaction is Endonucleolytic cleavage to nucleoside 3'-phosphates and 3'-phosphooligonucleotide end-products.. Functionally, enzyme that catalyzes the hydrolysis of both DNA and RNA at the 5' position of the phosphodiester bond. This Staphylococcus aureus (strain MRSA252) protein is Thermonuclease (nuc).